The sequence spans 743 residues: Protein will decrease acetylation (743 aa).

WD repeat units lie at residues 389 to 428, 493 to 524, 535 to 576, 577 to 618, 619 to 660, and 661 to 702; these read ERSR…CRGK, LRGH…MRCW, YRSH…ALII, YAGH…LMRV, FADC…QLAE, and LKDH…PMSD.

This sequence belongs to the WD repeat TAF5 family. As to quaternary structure, component of the Spt-Ada-Gcn5 acetyltransferase (SAGA) complex consisting of wda/Taf5L, Saf6, Taf9, Taf10b, Taf12, Ada1, Spt3, Spt7, Spt20, Sf3b3, Sf3b5, Nipped-A/Tra1, a histone acetyltransferase (HAT) module made up of Gcn5, Ada2b (Isoform B), Ada3 and Sgf29, and a deubiquitinase (DUB) module made up of not/nonstop, Sgf11 and e(y)2 tethered to SAGA by Atxn7. Not essential for the assembly or integrity of the SAGA complex. Not a component of the Ada2a-containing ATAC complex.

It localises to the nucleus. Its subcellular location is the chromosome. Functionally, component of the transcription regulatory complex SAGA, a multiprotein complex that activates transcription by remodeling chromatin and mediating histone acetylation and deubiquitination. The SAGA complex predominantly acetylates histone H3. Involved in acetylation of histone H3 on 'Lys-10' (H3K9ac) by the SAGA complex in the larval central nervous system. Involved in SAGA complex coactivator functions. Required for oogenesis. In Drosophila melanogaster (Fruit fly), this protein is Protein will decrease acetylation.